The primary structure comprises 126 residues: Large ribosomal subunit protein bL12 (126 aa).

Belongs to the bacterial ribosomal protein bL12 family. In terms of assembly, homodimer. Part of the ribosomal stalk of the 50S ribosomal subunit. Forms a multimeric L10(L12)X complex, where L10 forms an elongated spine to which 2 to 4 L12 dimers bind in a sequential fashion. Binds GTP-bound translation factors.

Its function is as follows. Forms part of the ribosomal stalk which helps the ribosome interact with GTP-bound translation factors. Is thus essential for accurate translation. The sequence is that of Large ribosomal subunit protein bL12 from Trichlorobacter lovleyi (strain ATCC BAA-1151 / DSM 17278 / SZ) (Geobacter lovleyi).